We begin with the raw amino-acid sequence, 409 residues long: Adenosine receptor A2a (409 aa).

Topologically, residues 1–4 are extracellular; sequence MSSS. Residues 5–29 form a helical membrane-spanning segment; sequence VYITVELVIAVLAILGNVLVCWAVW. Topologically, residues 30–39 are cytoplasmic; sequence INSNLQNVTN. Residues 40–63 form a helical membrane-spanning segment; it reads YFVVSLAAADIAVGVLAIPFAITI. Residues 64–74 lie on the Extracellular side of the membrane; it reads STGFCAACHGC. 3 disulfides stabilise this stretch: Cys68/Cys156, Cys71/Cys143, and Cys74/Cys163. The chain crosses the membrane as a helical span at residues 75 to 97; that stretch reads LFFACFVLVLTQSSIFSLLTITI. Residues 98 to 117 are Cytoplasmic-facing; sequence DRYIAIRIPLRYNGLVTCTR. Residues 118 to 140 traverse the membrane as a helical segment; the sequence is AKGIIAICWVLSFAIGLTPMLGW. The Extracellular portion of the chain corresponds to 141 to 170; it reads NNCSQPKGDKNHSESCDEGQVTCLFEDVVP. 2 N-linked (GlcNAc...) asparagine glycosylation sites follow: Asn142 and Asn151. Glu166 is an adenosine binding site. Residues 171–195 form a helical membrane-spanning segment; the sequence is MNYMVYYNFFAFVLVPLLLMLGIYL. The Cytoplasmic segment spans residues 196 to 231; it reads RIFLAARRQLKQMESQPLPGERTRSTLQKEVHPAKS. A helical membrane pass occupies residues 232-255; sequence LAIIVGLFALCCLPLNIINCFTFF. Asn250 contributes to the adenosine binding site. A disulfide bond links Cys256 and Cys259. At 256-263 the chain is on the extracellular side; that stretch reads CPECDHAP. Residues 264 to 287 form a helical membrane-spanning segment; sequence PWLMYLTIILSHGNSVVNPLIYAY. Adenosine contacts are provided by Ser274 and His275. Residues 288–409 lie on the Cytoplasmic side of the membrane; that stretch reads RIREFRQTFR…PPAHGGAGVS (122 aa). Disordered regions lie at residues 316 to 336 and 369 to 409; these read TSARASAAHSPEGEQVSLRLN and QRSH…AGVS.

This sequence belongs to the G-protein coupled receptor 1 family. In terms of assembly, interacts (via cytoplasmic C-terminal domain) with USP4; the interaction is direct. May interact with DRD4. Interacts with NECAB2. Interacts (via cytoplasmic C-terminal domain) with GAS2L2; interaction enhances receptor-mediated adenylyl cyclase activity. Post-translationally, ubiquitinated. Deubiquitinated by USP4; leading to stabilization and expression at the cell surface.

Its subcellular location is the cell membrane. Receptor for adenosine. The activity of this receptor is mediated by G proteins which activate adenylyl cyclase. This chain is Adenosine receptor A2a (ADORA2A), found in Cavia porcellus (Guinea pig).